The following is a 514-amino-acid chain: Cobyric acid synthase (514 aa).

In terms of domain architecture, GATase cobBQ-type spans 249–448 (LIDIAVIKLP…VHGVFDNDEI (200 aa)). The active-site Nucleophile is the C330. H440 is a catalytic residue.

The protein belongs to the CobB/CobQ family. CobQ subfamily.

The protein operates within cofactor biosynthesis; adenosylcobalamin biosynthesis. In terms of biological role, catalyzes amidations at positions B, D, E, and G on adenosylcobyrinic A,C-diamide. NH(2) groups are provided by glutamine, and one molecule of ATP is hydrogenolyzed for each amidation. This Ruminiclostridium cellulolyticum (strain ATCC 35319 / DSM 5812 / JCM 6584 / H10) (Clostridium cellulolyticum) protein is Cobyric acid synthase.